A 43-amino-acid polypeptide reads, in one-letter code: Protein PsbN (43 aa).

The chain crosses the membrane as a helical span at residues 7 to 27 (VAIFISGLLVSFTGYALYTAF).

It belongs to the PsbN family.

Its subcellular location is the plastid. It is found in the chloroplast thylakoid membrane. May play a role in photosystem I and II biogenesis. This is Protein PsbN from Sagittaria latifolia (Broadleaf arrowhead).